A 338-amino-acid chain; its full sequence is 1-aminocyclopropane-1-carboxylate deaminase (338 aa).

Lysine 51 carries the N6-(pyridoxal phosphate)lysine modification. Residue serine 78 is the Nucleophile of the active site.

The protein belongs to the ACC deaminase/D-cysteine desulfhydrase family. Homotrimer. The cofactor is pyridoxal 5'-phosphate.

The catalysed reaction is 1-aminocyclopropane-1-carboxylate + H2O = 2-oxobutanoate + NH4(+). Its function is as follows. Catalyzes a cyclopropane ring-opening reaction, the irreversible conversion of 1-aminocyclopropane-1-carboxylate (ACC) to ammonia and alpha-ketobutyrate. Allows growth on ACC as a nitrogen source. In Acidovorax ebreus (strain TPSY) (Diaphorobacter sp. (strain TPSY)), this protein is 1-aminocyclopropane-1-carboxylate deaminase.